Consider the following 347-residue polypeptide: Ribosomal RNA small subunit methyltransferase H (347 aa).

S-adenosyl-L-methionine contacts are provided by residues 50-52 (GGH), aspartate 69, phenylalanine 96, aspartate 125, and glutamine 132.

This sequence belongs to the methyltransferase superfamily. RsmH family.

Its subcellular location is the cytoplasm. The catalysed reaction is cytidine(1402) in 16S rRNA + S-adenosyl-L-methionine = N(4)-methylcytidine(1402) in 16S rRNA + S-adenosyl-L-homocysteine + H(+). Functionally, specifically methylates the N4 position of cytidine in position 1402 (C1402) of 16S rRNA. The chain is Ribosomal RNA small subunit methyltransferase H from Corynebacterium aurimucosum (strain ATCC 700975 / DSM 44827 / CIP 107346 / CN-1) (Corynebacterium nigricans).